Consider the following 339-residue polypeptide: uncharacterized protein (339 aa).

To bacterial alkanal monooxygenase alpha and beta chains.

This is an uncharacterized protein from Bacillus subtilis (strain 168).